The following is a 285-amino-acid chain: Polyamine aminopropyltransferase (285 aa).

Residues 2–237 (EFWFSELHSP…GYWLFGFASK (236 aa)) form the PABS domain. Residue glutamine 31 participates in S-methyl-5'-thioadenosine binding. Residue aspartate 86 coordinates spermidine. Residues glutamate 106 and 137–138 (DA) each bind S-methyl-5'-thioadenosine. Aspartate 155 functions as the Proton acceptor in the catalytic mechanism.

Belongs to the spermidine/spermine synthase family. In terms of assembly, homodimer or homotetramer.

The protein localises to the cytoplasm. It carries out the reaction S-adenosyl 3-(methylsulfanyl)propylamine + putrescine = S-methyl-5'-thioadenosine + spermidine + H(+). The protein operates within amine and polyamine biosynthesis; spermidine biosynthesis; spermidine from putrescine: step 1/1. In terms of biological role, catalyzes the irreversible transfer of a propylamine group from the amino donor S-adenosylmethioninamine (decarboxy-AdoMet) to putrescine (1,4-diaminobutane) to yield spermidine. This is Polyamine aminopropyltransferase from Lachnospira eligens (strain ATCC 27750 / DSM 3376 / VPI C15-48 / C15-B4) (Eubacterium eligens).